A 427-amino-acid chain; its full sequence is Glutamate-1-semialdehyde 2,1-aminomutase (427 aa).

Lys-267 carries the N6-(pyridoxal phosphate)lysine modification.

It belongs to the class-III pyridoxal-phosphate-dependent aminotransferase family. HemL subfamily. Homodimer. Pyridoxal 5'-phosphate serves as cofactor.

Its subcellular location is the cytoplasm. The catalysed reaction is (S)-4-amino-5-oxopentanoate = 5-aminolevulinate. Its pathway is porphyrin-containing compound metabolism; protoporphyrin-IX biosynthesis; 5-aminolevulinate from L-glutamyl-tRNA(Glu): step 2/2. In Syntrophotalea carbinolica (strain DSM 2380 / NBRC 103641 / GraBd1) (Pelobacter carbinolicus), this protein is Glutamate-1-semialdehyde 2,1-aminomutase.